We begin with the raw amino-acid sequence, 579 residues long: MPALRKHPQTATKHLFVTGGVVSSLGKGLTGSSLGQLLTARGLQVTMQKLDPYLNVDPGTMNPFQHGEVFVTEDGAETDLDVGHYERFLDRNLSGSANVTTGQIYSSVIAKERRGEYLGDTVQVIPHITDEIKSRILAMAAPDEHGNRPDVVITEVGGTVGDIESLPFLEAARQVRHEVGRENCFFLHCSLVPYMAPSGELKTKPTQHSVAALRSIGIQPDALILRCDRDVPEALKNKIALMCDVDIDGVISTPDAPSIYDIPKVLHREELDAYVVRRLNLPFRDVDWTQWNDLLKRVHEPHETVRIALVGKYIDLSDAYLSVTEALRAGGFFHHAKVEMRWVASDDCELDSGAAAALADVDGVLIPGGFGIRGIEGKIGAISYARKRGLPVLGLCLGLQCIVIEAARSVGITGANSAEFDPATPDPVISTMADQRDAVAGAADLGGTMRLGAYPAVLEEDSIVARAYQATEVSERHRHRYEVNNAYRDRIAESGLRFSGTSPDGHLVEFVEYDAEQHPFLVGTQAHPELKSRPTRPHPLFAAFIGAALDYKAAERLPVEIPEQRSNGVELLQEPASRG.

The tract at residues methionine 1–leucine 281 is amidoligase domain. CTP is bound at residue serine 23. Serine 23 contacts UTP. ATP is bound by residues serine 24–leucine 29 and aspartate 81. 2 residues coordinate Mg(2+): aspartate 81 and glutamate 155. Residues aspartate 162–glutamate 164, lysine 202–glutamine 207, and lysine 238 contribute to the CTP site. Residues lysine 202–glutamine 207 and lysine 238 each bind UTP. The Glutamine amidotransferase type-1 domain occupies arginine 306–alanine 554. Glycine 369 contacts L-glutamine. The Nucleophile; for glutamine hydrolysis role is filled by cysteine 396. Residues leucine 397–glutamine 400, glutamate 419, and arginine 480 contribute to the L-glutamine site. Catalysis depends on residues histidine 527 and glutamate 529.

This sequence belongs to the CTP synthase family. In terms of assembly, homotetramer.

The enzyme catalyses UTP + L-glutamine + ATP + H2O = CTP + L-glutamate + ADP + phosphate + 2 H(+). The catalysed reaction is L-glutamine + H2O = L-glutamate + NH4(+). It carries out the reaction UTP + NH4(+) + ATP = CTP + ADP + phosphate + 2 H(+). It participates in pyrimidine metabolism; CTP biosynthesis via de novo pathway; CTP from UDP: step 2/2. With respect to regulation, allosterically activated by GTP, when glutamine is the substrate; GTP has no effect on the reaction when ammonia is the substrate. The allosteric effector GTP functions by stabilizing the protein conformation that binds the tetrahedral intermediate(s) formed during glutamine hydrolysis. Inhibited by the product CTP, via allosteric rather than competitive inhibition. Its function is as follows. Catalyzes the ATP-dependent amination of UTP to CTP with either L-glutamine or ammonia as the source of nitrogen. Regulates intracellular CTP levels through interactions with the four ribonucleotide triphosphates. The chain is CTP synthase from Mycobacterium sp. (strain KMS).